The sequence spans 31 residues: Large ribosomal subunit protein bL21 (31 aa).

It belongs to the bacterial ribosomal protein bL21 family. In terms of assembly, part of the 50S ribosomal subunit. Contacts protein L20.

Its function is as follows. This protein binds to 23S rRNA in the presence of protein L20. The protein is Large ribosomal subunit protein bL21 (rplU) of Streptococcus thermophilus.